Reading from the N-terminus, the 1759-residue chain is MDLGTAEGTRCTDPPAGKPAMAPKRKGGLKLNAICAKLSRQVVVEKRADAGSHTEGSPSQPRDQERSGPESGAARAPRSEEDKRRAVIEKWVNGEYSEEPAPTPVLGRIAREGLELPPEGVYMVQPQGCSDEEDHAEEPSKDGGALEEKDSDGAASKEDSGPSTRQASGEASSLRDYAASTMTEFLGMFGYDDQNTRDELARKISFEKLHAGSTPEAATSSMLPTSEDTLSKRARFSKYEEYIRKLKAGEQLSWPAPSTKTEERVGKEVVGTLPGLRLPSSTAHLETKATILPLPSHSSVQMQNLVARASKYDFFIQKLKTGENLRPQNGSTYKKPSKYDLENVKYLHLFKPGEGSPDMGGAIAFKTGKVGRPSKYDVRGIQKPGPAKVPPTPSLAPAPLASVPSAPSAPGPGPEPPASLSFNTPEYLKSTFSKTDSITTGTVSTVKNGLPTDKPAVTEDVNIYQKYIARFSGSQHCGHIHCAYQYREHYHCLDPECNYQRFTSKQDVIRHYNMHKKRDNSLQHGFMRFSPLDDCSVYYHGCHLNGKSTHYHCMQVGCNKVYTSTSDVMTHENFHKKNTQLINDGFQRFRATEDCGTADCQFYGQKTTHFHCRRPGCTFTFKNKCDIEKHKSYHIKDDAYAKDGFKKFYKYEECKYEGCVYSKATNHFHCIRAGCGFTFTSTSQMTSHKRKHERRHIRSSGALGLPPSLLGAKDTEHEESSNDDLVDFSALSSKNSSLSASPTSQQSSASLAAATAATEAGPSATKPPNSKISGLLPQGLPGSIPLALALSNSGLPTPTPYFPILAGRGSTSLPVGTPSLLGAVSSGSAASATPDTPTLVASGAGDSAPVAAASVPAPPASIMERISASKGLISPMMARLAAAALKPSATFDPGSGQQVTPARFPPAQVKPEPGESTGAPGPHEASQDRSLDLTVKEPSNESNGHAVPANSSLLSSLMNKMSQGNPGLGSLLNIKAEAEGSPAAEPSPFLGKAVKALVQEKLAEPWKVYLRRFGTKDFCDGQCDFLHKAHFHCVVEECGALFSTLDGAIKHANFHFRTEGGAAKGNTEAAFPASAAETKPPMAPSSPPVPPVTTATVSSLEGPAPSPASVPSTPTLLAWKQLASTIPQMPQIPASVPHLPASPLATTSLENAKPQVKPGFLQFQENDPCLATDCKYANKFHFHCLFGNCKYVCKTSGKAESHCLDHINPNNNLVNVRDQFAYYSLQCLCPNQHCEFRMRGHYHCLRTGCYFVTNITTKLPWHIKKHEKAERRAANGFKYFTKREECGRLGCKYNQVNSHFHCIREGCQFSFLLKHQMTSHARKHMRRMLGKNFDRVPPSQGPPGLMDAETDECMDYTGCSPGAMSSESSTMDRSCSSTPVGNESTAAGNTISMPTASGAKKRFWIIEDMSPFGKRRKTASSRKMLDEGMMLEGFRRFDLYEDCKDAACQFSLKVTHYHCTRENCGYKFCGRTHMYKHAQHHDRVDNLVLDDFKRFKASLSCHFADCPFSGTSTHFHCLRCRFRCTDSTKVTAHRKHHGKQDVISAAGFCQFSSSADCAVPDCKYKLKCSHFHCTFPGCRHTVVGMSQMDSHKRKHEKQERGEPAAEGPAPGPPISLDGSLSLGAEPGSLLFLQSAAAGLGLALGDAGDPGPPDAAAPGPREGAAAAAAAAGESSQEDEEEELELPEEEAEDDEDEDDDEDDDDEDDDEDDDDEDLRTDSEESLPEAAAEAAGAGARTPALAALAALGAPGPAPTAASSP.

Disordered stretches follow at residues 1-26 (MDLG…PKRK) and 46-175 (KRAD…SSLR). 2 stretches are compositionally biased toward basic and acidic residues: residues 77-88 (PRSEEDKRRAVI) and 137-160 (EEPS…KEDS). The segment covering 161-171 (GPSTRQASGEA) has biased composition (polar residues). Residue K288 forms a Glycyl lysine isopeptide (Lys-Gly) (interchain with G-Cter in SUMO2) linkage. The segment at 374 to 420 (SKYDVRGIQKPGPAKVPPTPSLAPAPLASVPSAPSAPGPGPEPPASL) is disordered. Residues 387-396 (AKVPPTPSLA) show a composition bias toward pro residues. Positions 397 to 406 (PAPLASVPSA) are enriched in low complexity. Positions 407–417 (PSAPGPGPEPP) are enriched in pro residues. C2H2-type zinc fingers lie at residues 551 to 575 (YHCM…ENFH), 610 to 634 (FHCR…KSYH), and 668 to 692 (FHCI…KRKH). 4 disordered regions span residues 686 to 723 (TSHK…SSND), 736 to 776 (SSLS…SGLL), 824 to 843 (VSSG…VASG), and 889 to 949 (ATFD…AVPA). Residues 687-698 (SHKRKHERRHIR) show a composition bias toward basic residues. Residues 699 to 712 (SSGALGLPPSLLGA) are compositionally biased toward low complexity. S720 and S721 each carry phosphoserine. Residues 736–764 (SSLSASPTSQQSSASLAAATAATEAGPSA) are compositionally biased toward low complexity. Over residues 925-939 (ASQDRSLDLTVKEPS) the composition is skewed to basic and acidic residues. Residue K975 forms a Glycyl lysine isopeptide (Lys-Gly) (interchain with G-Cter in SUMO2) linkage. S981 is modified (phosphoserine). Residues 1031–1055 (FHCVVEECGALFSTLDGAIKHANFH) form a C2H2-type 4 zinc finger. The interval 1067 to 1111 (TEAAFPASAAETKPPMAPSSPPVPPVTTATVSSLEGPAPSPASVP) is disordered. Pro residues predominate over residues 1081 to 1091 (PMAPSSPPVPP). The C2H2-type 5 zinc-finger motif lies at 1300–1324 (FHCIREGCQFSFLLKHQMTSHARKH). Residues 1367–1392 (ESSTMDRSCSSTPVGNESTAAGNTIS) form a disordered region. C2H2-type zinc fingers lie at residues 1457-1481 (YHCT…AQHH), 1515-1537 (FHCL…RKHH), and 1571-1595 (FHCT…KRKH). Disordered stretches follow at residues 1589–1620 (DSHK…DGSL) and 1643–1736 (LGDA…AGAR). The span at 1655 to 1673 (AAPGPREGAAAAAAAAGES) shows a compositional bias: low complexity. The span at 1674-1723 (SQEDEEEELELPEEEAEDDEDEDDDEDDDDEDDDEDDDDEDLRTDSEESL) shows a compositional bias: acidic residues. Positions 1724–1736 (PEAAAEAAGAGAR) are enriched in low complexity.

As to expression, expressed in heart, lung, skeletal muscle, pancreas, testis, small intestine, and stomach, but it is not detectable in the adult brain.

It localises to the nucleus. Its function is as follows. Transcriptional activator. Involved in vascular assembly and morphogenesis through direct transcriptional regulation of EGFL7. In Homo sapiens (Human), this protein is Zinc finger protein castor homolog 1 (CASZ1).